The primary structure comprises 95 residues: Selenoprotein K (95 aa).

A helical membrane pass occupies residues 20–42 (LSFITDFFWGIAEFVVLFFRTLL). Residues 47-95 (KKRRGYGSSSDSRYDDGRGPPGNPPRRRMGRINHLQGPNPPPMAGGUGR) form a disordered region. Selenocysteine 93 is a non-standard amino acid (selenocysteine).

The protein belongs to the selenoprotein K family. Interacts with DERL1, DERL2, DERL3 and SELENOS. The SELENOK-SELENOS complex interacts with VCP. Interacts with ZDHHC6. Cleaved by CAPN2/m-calpain in resting macrophages but not in activated macrophages. Macrophage activation up-regulates expression of the calpain inhibitor CAST/calpastatin, resulting in inhibition of CAPN2 activity. In terms of processing, truncated SELENOK proteins produced by failed UGA/Sec decoding are ubiquitinated by the CRL2(KLHDC2) complex, which recognizes the diglycine (Gly-Gly) at the C-terminus of truncated SELENOK proteins.

It localises to the endoplasmic reticulum membrane. It is found in the cell membrane. Functionally, required for Ca(2+) flux in immune cells and plays a role in T-cell proliferation and in T-cell and neutrophil migration. Involved in endoplasmic reticulum-associated degradation (ERAD) of soluble glycosylated proteins. Required for palmitoylation and cell surface expression of CD36 and involved in macrophage uptake of low-density lipoprotein and in foam cell formation. Together with ZDHHC6, required for palmitoylation of ITPR1 in immune cells, leading to regulate ITPR1 stability and function. Plays a role in protection of cells from ER stress-induced apoptosis. Protects cells from oxidative stress when overexpressed in cardiomyocytes. The chain is Selenoprotein K from Bos taurus (Bovine).